A 243-amino-acid polypeptide reads, in one-letter code: Pyridoxine 5'-phosphate synthase (243 aa).

Residue Asn7 coordinates 3-amino-2-oxopropyl phosphate. 9-10 is a 1-deoxy-D-xylulose 5-phosphate binding site; sequence DH. Arg18 is a binding site for 3-amino-2-oxopropyl phosphate. The active-site Proton acceptor is His43. The 1-deoxy-D-xylulose 5-phosphate site is built by Arg45 and His50. Glu70 acts as the Proton acceptor in catalysis. Thr100 is a binding site for 1-deoxy-D-xylulose 5-phosphate. His190 acts as the Proton donor in catalysis. Residues Gly191 and 212-213 each bind 3-amino-2-oxopropyl phosphate; that span reads GH.

This sequence belongs to the PNP synthase family. As to quaternary structure, homooctamer; tetramer of dimers.

It is found in the cytoplasm. It catalyses the reaction 3-amino-2-oxopropyl phosphate + 1-deoxy-D-xylulose 5-phosphate = pyridoxine 5'-phosphate + phosphate + 2 H2O + H(+). Its pathway is cofactor biosynthesis; pyridoxine 5'-phosphate biosynthesis; pyridoxine 5'-phosphate from D-erythrose 4-phosphate: step 5/5. In terms of biological role, catalyzes the complicated ring closure reaction between the two acyclic compounds 1-deoxy-D-xylulose-5-phosphate (DXP) and 3-amino-2-oxopropyl phosphate (1-amino-acetone-3-phosphate or AAP) to form pyridoxine 5'-phosphate (PNP) and inorganic phosphate. The protein is Pyridoxine 5'-phosphate synthase of Prochlorococcus marinus (strain MIT 9211).